The primary structure comprises 397 residues: MIGAADLVAGLTGLGVTTVAGVPCSYLTPLINRVISDPATRYLTVTQEGEAAAVAAGAWLGGGLGCAITQNSGLGNMTNPLTSLLHPARIPAVVITTWRGRPGEKDEPQHHLMGRITGDLLDLCDMEWSLIPDTTDELHTAFAACRASLAHRELPYGFLLPQGVVADEPLNETAPRSATGQVVRYARPGRSAARPTRIAALERLLAELPRDAAVVSTTGKSSRELYTLDDRDQHFYMVGAMGSAATVGLGVALHTPRPVVVVDGDGSVLMRLGSLATVGAHAPGNLVHLVLDNGVHDSTGGQRTLSSAVDLPAVAAACGYRAVHACTSLDDLSDALATALATDGPTLVHLAIRPGSLDGLGRPKVTPAEVARRFRAFVTTPPAGTATPVHAGGVTAR.

It belongs to the TPP enzyme family. The cofactor is thiamine diphosphate. Requires Mg(2+) as cofactor.

The enzyme catalyses 3-phosphonopyruvate + H(+) = phosphonoacetaldehyde + CO2. It functions in the pathway secondary metabolite biosynthesis; bialaphos biosynthesis. Functionally, involved in the biosynthesis of phosphinothricin tripeptide (PTT), also known as bialaphos (BA), a natural-product antibiotic and potent herbicide. Catalyzes the decarboxylation of phosphonopyruvate (PnPy) to generate phosphonoacetaldehyde (PnAA). The chain is Phosphonopyruvate decarboxylase from Streptomyces viridochromogenes (strain DSM 40736 / JCM 4977 / BCRC 1201 / Tue 494).